A 234-amino-acid polypeptide reads, in one-letter code: Leucyl/phenylalanyl-tRNA--protein transferase (234 aa).

This sequence belongs to the L/F-transferase family.

It is found in the cytoplasm. It catalyses the reaction N-terminal L-lysyl-[protein] + L-leucyl-tRNA(Leu) = N-terminal L-leucyl-L-lysyl-[protein] + tRNA(Leu) + H(+). The catalysed reaction is N-terminal L-arginyl-[protein] + L-leucyl-tRNA(Leu) = N-terminal L-leucyl-L-arginyl-[protein] + tRNA(Leu) + H(+). It carries out the reaction L-phenylalanyl-tRNA(Phe) + an N-terminal L-alpha-aminoacyl-[protein] = an N-terminal L-phenylalanyl-L-alpha-aminoacyl-[protein] + tRNA(Phe). Functionally, functions in the N-end rule pathway of protein degradation where it conjugates Leu, Phe and, less efficiently, Met from aminoacyl-tRNAs to the N-termini of proteins containing an N-terminal arginine or lysine. The protein is Leucyl/phenylalanyl-tRNA--protein transferase of Nitrosomonas eutropha (strain DSM 101675 / C91 / Nm57).